The chain runs to 85 residues: UPF0291 protein SPCG_1462 (85 aa).

Residues 62–85 (TPEKLRQVQREKGLHGRSLDDPNS) are disordered.

It belongs to the UPF0291 family.

The protein localises to the cytoplasm. The sequence is that of UPF0291 protein SPCG_1462 from Streptococcus pneumoniae (strain CGSP14).